The sequence spans 404 residues: Arginine biosynthesis bifunctional protein ArgJ (404 aa).

Substrate contacts are provided by Thr-156, Lys-182, Thr-193, Glu-277, Asn-399, and Ser-404. The active-site Nucleophile is Thr-193.

This sequence belongs to the ArgJ family. As to quaternary structure, heterotetramer of two alpha and two beta chains.

It localises to the cytoplasm. It catalyses the reaction N(2)-acetyl-L-ornithine + L-glutamate = N-acetyl-L-glutamate + L-ornithine. The enzyme catalyses L-glutamate + acetyl-CoA = N-acetyl-L-glutamate + CoA + H(+). It participates in amino-acid biosynthesis; L-arginine biosynthesis; L-ornithine and N-acetyl-L-glutamate from L-glutamate and N(2)-acetyl-L-ornithine (cyclic): step 1/1. Its pathway is amino-acid biosynthesis; L-arginine biosynthesis; N(2)-acetyl-L-ornithine from L-glutamate: step 1/4. Functionally, catalyzes two activities which are involved in the cyclic version of arginine biosynthesis: the synthesis of N-acetylglutamate from glutamate and acetyl-CoA as the acetyl donor, and of ornithine by transacetylation between N(2)-acetylornithine and glutamate. In Chlorobaculum tepidum (strain ATCC 49652 / DSM 12025 / NBRC 103806 / TLS) (Chlorobium tepidum), this protein is Arginine biosynthesis bifunctional protein ArgJ.